Reading from the N-terminus, the 200-residue chain is Polyadenylate-binding protein 1-like 2 (200 aa).

2 RRM domains span residues 2–80 (ASLY…WSQR) and 90–166 (GNVF…RFKS). Positions 170 to 200 (REAERGAWARQSTSADVKDFEEDTDEEATLR) are disordered. A compositionally biased stretch (acidic residues) spans 188-200 (DFEEDTDEEATLR).

This Homo sapiens (Human) protein is Polyadenylate-binding protein 1-like 2 (PABPC1L2A).